Here is an 878-residue protein sequence, read N- to C-terminus: Splicing factor 3B subunit 2 (878 aa).

Over residues 1–10 (MAAEHPEPPK) the composition is skewed to basic and acidic residues. Disordered regions lie at residues 1–25 (MAAE…GHYG) and 67–136 (RPVL…LRVG). Lys-10 participates in a covalent cross-link: Glycyl lysine isopeptide (Lys-Gly) (interchain with G-Cter in SUMO2). Positions 24 to 58 (YGAWAAQELQARLAEIGAPIQGSREELVERLQTYT) constitute an SAP domain. 2 stretches are compositionally biased toward pro residues: residues 91-114 (PMPP…PPPG) and 122-133 (AHPPNLGPPPPL). A coiled-coil region spans residues 140 to 177 (ALSEEERLKLAQQQAALLMQQEERAKQAAVLMEQERQQ). Disordered stretches follow at residues 183–356 (GTAV…EYVT) and 383–436 (KKEK…SKKK). Over residues 201–221 (PLGPRVAAPVGPVVPTPTVLP) the composition is skewed to low complexity. Residues Arg-205, Arg-228, and Arg-230 each carry the omega-N-methylarginine modification. A compositionally biased stretch (pro residues) spans 224–237 (APVPRPRGPPPPPG). Lys-258 bears the N6-acetyllysine mark. A compositionally biased stretch (basic and acidic residues) spans 260–269 (LQLKESRQEE). Residue Lys-263 forms a Glycyl lysine isopeptide (Lys-Gly) (interchain with G-Cter in SUMO2) linkage. Ser-272 carries the phosphoserine modification. A Phosphothreonine modification is found at Thr-281. 2 positions are modified to phosphoserine: Ser-290 and Ser-292. Thr-294 is modified (phosphothreonine). Residue Ser-300 is modified to Phosphoserine. Residues 305–321 (EKNRKRRNRKKKKKPQR) are compositionally biased toward basic residues. Over residues 330 to 342 (SGDREKDSGRSRG) the composition is skewed to basic and acidic residues. Position 343 is a phosphoserine (Ser-343). Glycyl lysine isopeptide (Lys-Gly) (interchain with G-Cter in SUMO2) cross-links involve residues Lys-383 and Lys-395. 2 stretches are compositionally biased toward basic and acidic residues: residues 383–397 (KKEK…DKME) and 405–414 (KGFEEEHKDS). The tract at residues 384-533 (KEKEKEPEKL…QEKEEQKTMK (150 aa)) is required for interaction with PRMT9. 3 positions are modified to phosphoserine: Ser-414, Ser-418, and Ser-419. A Glycyl lysine isopeptide (Lys-Gly) (interchain with G-Cter in SUMO2) cross-link involves residue Lys-475. Residues Arg-491 and Arg-498 each carry the omega-N-methylarginine modification. Arg-491 carries the post-translational modification Symmetric dimethylarginine. A Glycyl lysine isopeptide (Lys-Gly) (interchain with G-Cter in SUMO2) cross-link involves residue Lys-526. The segment at 674–740 (AAEFQTKTEE…PGGFSSVPAG (67 aa)) is disordered. Over residues 695–715 (EPSDEESSEEEEEEESDEDKP) the composition is skewed to acidic residues. Residue Lys-753 forms a Glycyl lysine isopeptide (Lys-Gly) (interchain with G-Cter in SUMO2) linkage. A Phosphothreonine modification is found at Thr-763. Glycyl lysine isopeptide (Lys-Gly) (interchain with G-Cter in SUMO2) cross-links involve residues Lys-773, Lys-826, and Lys-840. A compositionally biased stretch (basic and acidic residues) spans 827–852 (YEEHVREQQAQVEKEDFSDMVAEHAA). The interval 827–878 (YEEHVREQQAQVEKEDFSDMVAEHAAKQKQKKRKAQPQDSRGGSKKYKEFKF) is disordered. Position 844 is a phosphoserine (Ser-844).

As to quaternary structure, component of the 17S U2 SnRNP complex, a ribonucleoprotein complex that contains small nuclear RNA (snRNA) U2 and a number of specific proteins. Part of the SF3B subcomplex of the 17S U2 SnRNP complex. SF3B associates with the splicing subcomplex SF3A and a 12S RNA unit to form the U2 small nuclear ribonucleoproteins complex (U2 snRNP). Within the SF3B complex, interacts directly with SF3B4. Found in a complex with PRMT9, SF3B2 and SF3B4. Interacts (Arg-491-methylated form) with SMN1 (via Tudor domain). Interacts with RBM7. Interacts with ERCC6. Component of the minor spliceosome. Within this complex, interacts with SCNM1 and CRIPT. In terms of processing, methylation at Arg-491 by PRMT9 is required for the interaction with SMN1.

Its subcellular location is the nucleus. The protein resides in the nucleus speckle. Its function is as follows. Component of the 17S U2 SnRNP complex of the spliceosome, a large ribonucleoprotein complex that removes introns from transcribed pre-mRNAs. The 17S U2 SnRNP complex (1) directly participates in early spliceosome assembly and (2) mediates recognition of the intron branch site during pre-mRNA splicing by promoting the selection of the pre-mRNA branch-site adenosine, the nucleophile for the first step of splicing. Within the 17S U2 SnRNP complex, SF3B2 is part of the SF3B subcomplex, which is required for 'A' complex assembly formed by the stable binding of U2 snRNP to the branchpoint sequence in pre-mRNA. Sequence independent binding of SF3A and SF3B subcomplexes upstream of the branch site is essential, it may anchor U2 snRNP to the pre-mRNA. May also be involved in the assembly of the 'E' complex. Also acts as a component of the minor spliceosome, which is involved in the splicing of U12-type introns in pre-mRNAs. This is Splicing factor 3B subunit 2 from Mus musculus (Mouse).